Reading from the N-terminus, the 154-residue chain is Protein X (154 aa).

The interval arginine 28–aspartate 48 is disordered. A compositionally biased stretch (low complexity) spans leucine 30 to proline 46. Residues proline 68–phenylalanine 117 are mitochondrial targeting sequence.

This sequence belongs to the orthohepadnavirus protein X family. May form homodimer. May interact with host CEBPA, CFLAR, CREB1, DDB1, E4F1, HBXIP, HSPD1/HSP60, NFKBIA, POLR2E and SMAD4. Interacts with host SMC5-SMC6 complex and induces its degradation. Interacts with host TRPC4AP; leading to prevent ubiquitination of TRPC4AP. Interacts with host PLSCR1; this interaction promotes ubiquitination and degradation of HBx and impairs HBx-mediated cell proliferation. A fraction may be phosphorylated in insect cells and HepG2 cells, a human hepatoblastoma cell line. Phosphorylated in vitro by host protein kinase C or mitogen-activated protein kinase. N-acetylated in insect cells.

The protein resides in the host cytoplasm. Its subcellular location is the host nucleus. It localises to the host mitochondrion. In terms of biological role, multifunctional protein that plays a role in silencing host antiviral defenses and promoting viral transcription. Does not seem to be essential for HBV infection. May be directly involved in development of cirrhosis and liver cancer (hepatocellular carcinoma). Most of cytosolic activities involve modulation of cytosolic calcium. The effect on apoptosis is controversial depending on the cell types in which the studies have been conducted. May induce apoptosis by localizing in mitochondria and causing loss of mitochondrial membrane potential. May also modulate apoptosis by binding host CFLAR, a key regulator of the death-inducing signaling complex (DISC). Promotes viral transcription by using the host E3 ubiquitin ligase DDB1 to target the SMC5-SMC6 complex to proteasomal degradation. This host complex would otherwise bind to viral episomal DNA, and prevents its transcription. Moderately stimulates transcription of many different viral and cellular transcription elements. Promoters and enhancers stimulated by HBx contain DNA binding sites for NF-kappa-B, AP-1, AP-2, c-EBP, ATF/CREB, or the calcium-activated factor NF-AT. The protein is Protein X of Homo sapiens (Human).